We begin with the raw amino-acid sequence, 813 residues long: MKFGKEFSSQMVPEWQQAYMDYDFLKTLLKEIITFKRRTNNAPSHGGAKTGGGLNRKLTLYRAFSGLVSTPRHKRSNSSHDVEEGVQLTGSMRSGPILVNTTASHGYETTFLMAAEEGGEYELVFFRRLDDEFNKVDKFYRKKVEEVLKEAAMLNKQMDALIAFRVKVENPDGWRWEERTVEMTRLASDIATSAAALSASTPAGAKSMKVRSQEHMEAIQEGGSSRAGLMEDDEEDEDEQNETSVVSTGAIDNETTTSRMRGARPSPIDVLGRVKINNTKETPRSTIKGVLKVSKQTDLKFSRENLMKVEESLKRAFIEFYQKLRLLKSYSFLNVLAFSKILKKYDKITSRDATKPYMKVVDSSYLGSSDEVMRLMERVEATFIKHFANANRAKAMNILRPKAKRERHRITFSTGFSAGCVFSLIVALVAIIRTRNLLEMEGQKEYMNTMFPLYSLFGFIVLHIIVYAANIYYWRRYRVNYSFIFGFKQGTELGYRQVLLVGFSIGVLALLCVLANLDMEADPKTKAYQARTEILPLILLAAMFIVLVLPFNYFYRSSRFFFLTCLFHCLAAPLYKVTLPDFFLGDQLTSQVQAIRSIEFYICYYGWGDFRHRKSTCKESDVYNTFFFIVAVIPYVSRLLQCLRRLFEEKNPEQGYNGLKYFLTIVAVCLRTAYSIQKGQVAWRVLAAVFSFIAAIFCTYWDFVHDWGLLNRTSKNRWLRDKLLVPQKKVYFIAMVLNVLLRFAWIQTVLDFNFSFMHRQTMVAIVASLEIIRRGIWNFFRLENEHLNNVGKYRAFKSVPLPFNYDEDDDKDN.

Residues M1–K359 enclose the SPX domain. Residues M1–T411 lie on the Cytoplasmic side of the membrane. Residues E214–S266 form a disordered region. The segment covering M230–N241 has biased composition (acidic residues). A helical membrane pass occupies residues F412–I432. The Extracellular portion of the chain corresponds to R433–M450. Residues F451–I471 traverse the membrane as a helical segment. Topologically, residues Y472 to R496 are cytoplasmic. Residues Q497–L517 traverse the membrane as a helical segment. The Extracellular portion of the chain corresponds to D518 to E533. A helical transmembrane segment spans residues I534–F554. The Cytoplasmic portion of the chain corresponds to Y555–R684. One can recognise an EXS domain in the interval K618 to N813. A helical membrane pass occupies residues V685–H705. Residues D706–K729 lie on the Extracellular side of the membrane. Residues V730 to L750 form a helical membrane-spanning segment. Residues D751–N813 are Cytoplasmic-facing.

Belongs to the SYG1 (TC 2.A.94) family. Expressed in vascular cylinder of roots, leaves and filaments. Expressed in receptacle and stigma apex.

It localises to the cell membrane. May transport inorganic phosphate (Pi). The protein is Phosphate transporter PHO1 homolog 3 (PHO1;H3) of Arabidopsis thaliana (Mouse-ear cress).